The chain runs to 278 residues: Casein kinase II subunit beta (278 aa).

2 disordered regions span residues 1–22 (MSQEFVEDYSRTGSSDDEDSGA) and 78–111 (DEEEDEDDVVEEDEVDQEMQSNDGHDEGKRRNKS). S2 carries the N-acetylserine modification. S2 is modified (phosphoserine). Positions 78–94 (DEEEDEDDVVEEDEVDQ) are enriched in acidic residues.

The protein belongs to the casein kinase 2 subunit beta family. As to quaternary structure, tetramer composed of an alpha subunit, an alpha' subunit, one beta subunit and one beta' subunit. Interacts with FACT subunits POB3 and SPT16. interacts with YTA7. Post-translationally, phosphorylated by alpha subunit.

Its function is as follows. Regulatory subunit of casein kinase II/CK2. As part of the kinase complex regulates the basal catalytic activity of the alpha subunit a constitutively active serine/threonine-protein kinase that phosphorylates a large number of substrates containing acidic residues C-terminal to the phosphorylated serine or threonine. The sequence is that of Casein kinase II subunit beta (CKB1) from Saccharomyces cerevisiae (strain ATCC 204508 / S288c) (Baker's yeast).